The sequence spans 197 residues: Translation machinery-associated protein 22 (197 aa).

The region spanning 102–173 (VQIKRVERNK…DVKEWLLEVY (72 aa)) is the SUI1 domain.

The protein belongs to the DENR family. In terms of assembly, interacts with the 40S ribosomal subunit.

It is found in the cytoplasm. The polypeptide is Translation machinery-associated protein 22 (tma22) (Aspergillus niger (strain ATCC MYA-4892 / CBS 513.88 / FGSC A1513)).